Consider the following 210-residue polypeptide: Small ribosomal subunit protein uS3 (210 aa).

The KH type-2 domain maps to 38–106; it reads LKSFLKKRLY…EVYLNIQEVR (69 aa).

The protein belongs to the universal ribosomal protein uS3 family. As to quaternary structure, part of the 30S ribosomal subunit. Forms a tight complex with proteins S10 and S14.

Binds the lower part of the 30S subunit head. Binds mRNA in the 70S ribosome, positioning it for translation. The chain is Small ribosomal subunit protein uS3 from Geotalea daltonii (strain DSM 22248 / JCM 15807 / FRC-32) (Geobacter daltonii).